The following is a 1499-amino-acid chain: DENN domain-containing protein 4B (1499 aa).

Residues 26–45 (PEEKWVPEPTGPLRPPRPAE) are disordered. The span at 34–44 (PTGPLRPPRPA) shows a compositional bias: pro residues. Residues 44–203 (AEPITDVAVI…AVYLCYKVGL (160 aa)) form the MABP domain. A uDENN domain is found at 195–369 (VYLCYKVGLA…NVPFPSPQRP (175 aa)). The cDENN domain occupies 390-526 (PLPLSGASFL…PYKLLLATLT (137 aa)). The dDENN domain maps to 528–644 (LYQQLDQTYT…ECSFGSARHA (117 aa)). Residues 717 to 744 (PQEQQGALPVPGPSRSAPSSPAPRRTKQ) form a disordered region. The segment covering 729–739 (PSRSAPSSPAP) has biased composition (low complexity). 2 PPR repeats span residues 775 to 811 (WFLC…VVLP) and 812 to 846 (DEVC…GIVP). Disordered stretches follow at residues 890–968 (PLKD…ARGT), 988–1115 (PRGS…SLGS), and 1204–1226 (RPSA…APAP). The segment covering 897–915 (QQQQQQQQQQQKQQVAEQQ) has biased composition (low complexity). Residues 933–942 (RPLQRQTTWA) show a composition bias toward polar residues. Phosphoserine is present on Ser951. The segment covering 1074–1083 (IPPPELPSDL) has biased composition (pro residues). Ser1090 is subject to Phosphoserine. Residues 1103–1115 (GSTASESSASLGS) are compositionally biased toward low complexity.

The protein localises to the golgi apparatus. Functionally, guanine nucleotide exchange factor (GEF) which may activate RAB10. Promotes the exchange of GDP to GTP, converting inactive GDP-bound Rab proteins into their active GTP-bound form. The polypeptide is DENN domain-containing protein 4B (Dennd4b) (Mus musculus (Mouse)).